A 537-amino-acid chain; its full sequence is uncharacterized protein (537 aa).

This is an uncharacterized protein from Bacillus subtilis (strain 168).